A 118-amino-acid chain; its full sequence is Basic phospholipase A2 PA-12C (118 aa).

7 disulfide bridges follow: C11–C71, C27–C117, C29–C45, C44–C98, C51–C91, C60–C84, and C78–C89. Y28, G30, and G32 together coordinate Ca(2+). Residue H48 is part of the active site. D49 serves as a coordination point for Ca(2+). D92 is a catalytic residue.

This sequence belongs to the phospholipase A2 family. Group I subfamily. D49 sub-subfamily. It depends on Ca(2+) as a cofactor. In terms of tissue distribution, expressed by the venom gland.

It localises to the secreted. It catalyses the reaction a 1,2-diacyl-sn-glycero-3-phosphocholine + H2O = a 1-acyl-sn-glycero-3-phosphocholine + a fatty acid + H(+). PLA2 catalyzes the calcium-dependent hydrolysis of the 2-acyl groups in 3-sn-phosphoglycerides. The chain is Basic phospholipase A2 PA-12C from Pseudechis australis (Mulga snake).